The primary structure comprises 343 residues: Calcium/calmodulin-dependent protein kinase type 1B (343 aa).

The Protein kinase domain occupies 15–270; sequence YEIRERLGSG…CQQALRHLWI (256 aa). ATP is bound by residues 21–29 and K44; that span reads LGSGAFSEV. The active-site Proton acceptor is D136. The interval 290–311 is calmodulin-binding; sequence KNFARTHWKRAFNATSFLRHIR. Residues 319–343 form a disordered region; that stretch reads GEGASEQGMARHSHSGLRAGQPPKW.

It belongs to the protein kinase superfamily. CAMK Ser/Thr protein kinase family. CaMK subfamily. Phosphorylated by CAMKK1.

The protein resides in the cytoplasm. Its subcellular location is the nucleus. It carries out the reaction L-seryl-[protein] + ATP = O-phospho-L-seryl-[protein] + ADP + H(+). It catalyses the reaction L-threonyl-[protein] + ATP = O-phospho-L-threonyl-[protein] + ADP + H(+). Its activity is regulated as follows. Activated by Ca(2+)/calmodulin. Functionally, calcium/calmodulin-dependent protein kinase belonging to a proposed calcium-triggered signaling cascade. In vitro phosphorylates CREB1 and SYN1/synapsin I. Phosphorylates and activates CAMK1. This chain is Calcium/calmodulin-dependent protein kinase type 1B (PNCK), found in Homo sapiens (Human).